The sequence spans 134 residues: MATKMAGVKRAGRKRKERKNIERGAAHIRSTFNNTIVTITDVEGNTISWSSAGTLGFRGSRKSTPFAAQMAAEAAAKAAMEHGLKTVEVYVKGPGSGREAAIRALQAAGLEVSLIKDVTPIPHNGCRPPKRRRV.

The disordered stretch occupies residues 1-24 (MATKMAGVKRAGRKRKERKNIERG).

This sequence belongs to the universal ribosomal protein uS11 family. Part of the 30S ribosomal subunit. Interacts with proteins S7 and S18. Binds to IF-3.

Located on the platform of the 30S subunit, it bridges several disparate RNA helices of the 16S rRNA. Forms part of the Shine-Dalgarno cleft in the 70S ribosome. This is Small ribosomal subunit protein uS11 from Acetivibrio thermocellus (strain ATCC 27405 / DSM 1237 / JCM 9322 / NBRC 103400 / NCIMB 10682 / NRRL B-4536 / VPI 7372) (Clostridium thermocellum).